A 470-amino-acid chain; its full sequence is Cysteine--tRNA ligase (470 aa).

C27 is a Zn(2+) binding site. Positions 29-39 (PTVYNYIHIGN) match the 'HIGH' region motif. Zn(2+) is bound by residues C207, H232, and E236. The 'KMSKS' region signature appears at 264–268 (KMSKS). K267 serves as a coordination point for ATP.

Belongs to the class-I aminoacyl-tRNA synthetase family. Monomer. Zn(2+) is required as a cofactor.

It localises to the cytoplasm. It carries out the reaction tRNA(Cys) + L-cysteine + ATP = L-cysteinyl-tRNA(Cys) + AMP + diphosphate. The protein is Cysteine--tRNA ligase of Lachnoclostridium phytofermentans (strain ATCC 700394 / DSM 18823 / ISDg) (Clostridium phytofermentans).